The chain runs to 210 residues: Ribonuclease HII (210 aa).

The RNase H type-2 domain maps to 18 to 207; that stretch reads RFVAGVDEVG…VHKILCKEET (190 aa). Residues Asp-24, Glu-25, and Asp-115 each contribute to the a divalent metal cation site.

Belongs to the RNase HII family. Mn(2+) is required as a cofactor. Mg(2+) serves as cofactor.

It is found in the cytoplasm. It catalyses the reaction Endonucleolytic cleavage to 5'-phosphomonoester.. In terms of biological role, endonuclease that specifically degrades the RNA of RNA-DNA hybrids. The chain is Ribonuclease HII from Paracoccus denitrificans (strain Pd 1222).